Here is a 626-residue protein sequence, read N- to C-terminus: MDPKATSTSKTDNIDQITIIEEKVNKIGTEPTIRKYSKGRMLGKGGFAKCYEVTNLENKKVLAGKIICKASLTKSRAKQKLISEIKIHKSLRHSNIVEFEHVFEDQENVYILLELCPNQSLHDLIKRRKRLTEIEVQCYTLQLICGLKYLHSRRVIHRDLKLGNLLLNDKMELKICDFGLAAKLEFDGEKRKTVCGTPNYIAPEVIEGKGGHSYEVDTWSLGVIIYTLLVGRPPFETSDVKQTYKRIKACEYSFPDHVSVSDTAKNLVQKMLTLDPSKRPSLDEILQHPFLKNANNIPKFLPASTLACPPSTSYLNQFASPENSVKVPSQPAPKSAEATPLAAQKNGRFINTQGSNMFGSEKTLVTSPHSATTQAHTNENVVLTSQLDRHQTQGEKGWNFTKTGSWQSNLNGTQSVKGSSRPQTVQQKGDLKSAQSLKAPALLNNLGSRLRVSGSAVGSNRGQVLSGNEVWVKKWVDYSSKYGMGYNLSNGTTGVFFNDNTKIVFNQKTDQVTYIQRGKNDRQDTVTHYSLTEYPKDLQKKMTLLQHFKKYLEGSEYGGSESINDGTETQIGVYVKKWVKTKNATLFRLSNKTVQVHFTDRTEIILNSENKQVTYVARKETEPISP.

A Protein kinase domain is found at 36-291; the sequence is YSKGRMLGKG…LDEILQHPFL (256 aa). ATP-binding positions include 42–50 and Lys65; that span reads LGKGGFAKC. Ser71 is modified (phosphoserine). Asp159 (proton acceptor) is an active-site residue. The tract at residues 399 to 433 is disordered; it reads NFTKTGSWQSNLNGTQSVKGSSRPQTVQQKGDLKS. The span at 400–427 shows a compositional bias: polar residues; sequence FTKTGSWQSNLNGTQSVKGSSRPQTVQQ. 2 consecutive POLO box domains span residues 471–554 and 574–626; these read WVKK…YLEG and YVKK…PISP.

The protein belongs to the protein kinase superfamily. Ser/Thr protein kinase family. CDC5/Polo subfamily. In terms of tissue distribution, embryo.

The enzyme catalyses L-seryl-[protein] + ATP = O-phospho-L-seryl-[protein] + ADP + H(+). The catalysed reaction is L-threonyl-[protein] + ATP = O-phospho-L-threonyl-[protein] + ADP + H(+). In terms of biological role, may play a role in the division of some cell types. The protein is Probable serine/threonine-protein kinase CCRP1 (CCRP1) of Zea mays (Maize).